A 326-amino-acid polypeptide reads, in one-letter code: Vitamin B12 import system permease protein BtuC (326 aa).

Helical transmembrane passes span 15–35 (WLLCLSVLMLLALLLSLCAGE), 61–81 (LAVLLVGAALAISGAVMQALF), 88–108 (PGLLGVSNGAGVGLIAAVLLG), 112–132 (LPNWALGLCAIAGALIITLIL), 146–166 (LLAGVALGIICSALMTWAIYF), 184–204 (GGVDWRQSWLMLALIPVLLWI), 240–260 (GWMVGVSVALAGAIGFIGLVI), 274–294 (VLLPGCALAGASAVLLADIVA), and 302–322 (ELPIGVVTATLGAPVFIWLLL).

It belongs to the binding-protein-dependent transport system permease family. FecCD subfamily. In terms of assembly, the complex is composed of two ATP-binding proteins (BtuD), two transmembrane proteins (BtuC) and a solute-binding protein (BtuF).

Its subcellular location is the cell inner membrane. Part of the ABC transporter complex BtuCDF involved in vitamin B12 import. Involved in the translocation of the substrate across the membrane. This Shigella sonnei (strain Ss046) protein is Vitamin B12 import system permease protein BtuC.